The sequence spans 600 residues: tRNA(Ile)-lysidine synthase, chloroplastic (600 aa).

35-40 (SGGQDS) is an ATP binding site.

The protein belongs to the tRNA(Ile)-lysidine synthase family.

It localises to the plastid. Its subcellular location is the chloroplast. The enzyme catalyses cytidine(34) in tRNA(Ile2) + L-lysine + ATP = lysidine(34) in tRNA(Ile2) + AMP + diphosphate + H(+). Its function is as follows. Ligates lysine onto the cytidine present at position 34 of the AUA codon-specific tRNA(Ile) that contains the anticodon CAU, in an ATP-dependent manner. Cytidine is converted to lysidine, thus changing the amino acid specificity of the tRNA from methionine to isoleucine. This chain is tRNA(Ile)-lysidine synthase, chloroplastic, found in Tupiella akineta (Green alga).